The sequence spans 245 residues: Orotidine 5'-phosphate decarboxylase (245 aa).

Substrate contacts are provided by residues D22, K44, 71-80, T131, R192, Q201, G221, and R222; that span reads DLKFHDIPNT. K73 functions as the Proton donor in the catalytic mechanism.

The protein belongs to the OMP decarboxylase family. Type 1 subfamily. In terms of assembly, homodimer.

It carries out the reaction orotidine 5'-phosphate + H(+) = UMP + CO2. It participates in pyrimidine metabolism; UMP biosynthesis via de novo pathway; UMP from orotate: step 2/2. Its function is as follows. Catalyzes the decarboxylation of orotidine 5'-monophosphate (OMP) to uridine 5'-monophosphate (UMP). The chain is Orotidine 5'-phosphate decarboxylase from Escherichia coli O45:K1 (strain S88 / ExPEC).